The chain runs to 237 residues: Cytosolic-abundant heat soluble protein 86272 (237 aa).

The interval 96-125 (FKDQEKYSREQAAIARAHDKDLEKKTEEYR) is disordered. The segment covering 111-125 (RAHDKDLEKKTEEYR) has biased composition (basic and acidic residues). The stretch at 115–193 (KDLEKKTEEY…MNALEQSKMA (79 aa)) forms a coiled coil. 2 CAHS motif regions span residues 124–142 (YRKTAEAEAEKIRKELEKQ) and 161–179 (QKREVDLEAKYAKKELEHE). Positions 204–215 (AGTTVSGGTTVS) are enriched in low complexity. A disordered region spans residues 204 to 237 (AGTTVSGGTTVSEHTEVHDGKEKKSLGEKIKSLF). Residues 216–237 (EHTEVHDGKEKKSLGEKIKSLF) are compositionally biased toward basic and acidic residues.

Belongs to the Cytosolic-abundant heat soluble protein (CAHS) family.

The protein resides in the cytoplasm. Its function is as follows. CAHS proteins are cytosolic heat soluble proteins that seem to contribute to the anhydrobiosis in tardigrades, but their specific mechanisms are yet to be identified. It is possible that protection during anhydrobiosis might occur via the stabilization of vitrifying small molecules such as sugars, but not via the direct glass transition of CAHS proteins themselves. In Hypsibius exemplaris (Freshwater tardigrade), this protein is Cytosolic-abundant heat soluble protein 86272.